A 462-amino-acid polypeptide reads, in one-letter code: L-seryl-tRNA(Sec) selenium transferase (462 aa).

Lys292 carries the N6-(pyridoxal phosphate)lysine modification.

The protein belongs to the SelA family. The cofactor is pyridoxal 5'-phosphate.

The protein localises to the cytoplasm. The catalysed reaction is L-seryl-tRNA(Sec) + selenophosphate + H(+) = L-selenocysteinyl-tRNA(Sec) + phosphate. Its pathway is aminoacyl-tRNA biosynthesis; selenocysteinyl-tRNA(Sec) biosynthesis; selenocysteinyl-tRNA(Sec) from L-seryl-tRNA(Sec) (bacterial route): step 1/1. Its function is as follows. Converts seryl-tRNA(Sec) to selenocysteinyl-tRNA(Sec) required for selenoprotein biosynthesis. The sequence is that of L-seryl-tRNA(Sec) selenium transferase from Geobacter metallireducens (strain ATCC 53774 / DSM 7210 / GS-15).